The following is a 486-amino-acid chain: Histamine H1 receptor (486 aa).

Topologically, residues Met1–Pro29 are extracellular. 2 N-linked (GlcNAc...) asparagine glycosylation sites follow: Asn5 and Asn18. A helical transmembrane segment spans residues Leu30–Tyr50. Residues Ala51–Leu64 lie on the Cytoplasmic side of the membrane. Residues Tyr65 to Ile89 traverse the membrane as a helical segment. Over Met90–Arg97 the chain is Extracellular. The helical transmembrane segment at Pro98–Ile123 threads the bilayer. An intrachain disulfide couples Cys100 to Cys180. Positions 107 and 112 each coordinate histamine. Residues Asp107–Thr112 form an important for agonist binding region. Topologically, residues Asp124–Ala144 are cytoplasmic. Phosphothreonine is present on residues Thr140 and Thr142. The helical transmembrane segment at Ser145–Gly164 threads the bilayer. At Trp165–Thr188 the chain is on the extracellular side. A helical transmembrane segment spans residues Trp189 to Val211. Asn198 is a histamine binding site. Over Lys212–Gln415 the chain is Cytoplasmic. Ser230 carries the phosphoserine modification. The span at Ser241 to Arg253 shows a compositional bias: basic and acidic residues. Disordered regions lie at residues Ser241 to Glu295 and Val310 to Ser379. Ser342 and Ser345 each carry phosphoserine. The segment covering Asp347–Ser365 has biased composition (polar residues). Ser379, Ser381, Ser395, and Ser397 each carry phosphoserine. The helical transmembrane segment at Leu416–Phe439 threads the bilayer. Positions Phe423–Trp427 are important for agonist binding. Tyr430 serves as a coordination point for histamine. Residues Cys440 and Cys443 are joined by a disulfide bond. The Extracellular segment spans residues Cys440–Ser445. The helical transmembrane segment at Glu446–Pro468 threads the bilayer. Residues Leu469–Ser486 are Cytoplasmic-facing.

This sequence belongs to the G-protein coupled receptor 1 family. Post-translationally, phosphorylation at sites in the second and third cytoplasmic loops independently contribute to agonist-induced receptor down-regulation.

The protein localises to the cell membrane. Its function is as follows. G-protein-coupled receptor for histamine, a biogenic amine that functions as an immune modulator and a neurotransmitter. Through the H1 receptor, histamine mediates the contraction of smooth muscles and increases capillary permeability due to contraction of terminal venules. Also mediates neurotransmission in the central nervous system and thereby regulates circadian rhythms, emotional and locomotor activities as well as cognitive functions. This is Histamine H1 receptor from Rattus norvegicus (Rat).